The chain runs to 102 residues: P antigen family member 4 (102 aa).

Positions 1-10 are enriched in basic residues; the sequence is MSARVRSRSR. The segment at 1 to 102 is disordered; the sequence is MSARVRSRSR…KTKEAGDGQP (102 aa). S7 is modified (phosphoserine; by CLK2). At S9 the chain carries Phosphoserine; by HIPK1 and CLK2. The span at 45–85 shows a compositional bias: basic and acidic residues; that stretch reads GQEREGTPPIEERKVEGDCQEMDLEKTRSERGDGSDVKEKT. T51 is subject to Phosphothreonine; by HIPK1 and CLK2. Residue T71 is modified to Phosphothreonine; by CLK2. S73 and S79 each carry phosphoserine; by CLK2. A phosphothreonine; by CLK2 mark is found at T85 and T94.

It belongs to the GAGE family. In terms of assembly, interacts with JUN. HIPK1-mediated phosphorylation at Thr-51 leads to the compaction of its intrinsically disordered conformation and is critical for its ability to potentiate the transcriptional activator activity of JUN inspite of a reduced interaction with JUN. CLK2-mediated phosphorylation at multiple Ser and Thr residues attenuates its ability to potentiate JUN transcriptional activator activity. As to expression, expressed at basal lvels in the adult normal prostate gland but is highly up-regulated in the fetal prostate and prostate cancer cells. Preferentially expressed in normal male and female reproductive tissues, testis, fallopian tube, uterus, and placenta, as well as in testicular cancer, uterine cancer, cervical cancer and kidney cancer.

It is found in the cytoplasm. The protein resides in the nucleus. Its subcellular location is the mitochondrion. Intrinsically disordered protein that potentiates the transcriptional activator activity of JUN. Protects cells from stress-induced apoptosis by inhibiting reactive oxygen species (ROS) production and via regulation of the MAPK signaling pathway. The chain is P antigen family member 4 (PAGE4) from Homo sapiens (Human).